The following is a 197-amino-acid chain: Molybdenum cofactor guanylyltransferase (197 aa).

Residues 10-12 (LAG), Lys23, Asp69, and Asp99 each bind GTP. Asp99 is a binding site for Mg(2+).

This sequence belongs to the MobA family. In terms of assembly, monomer. Requires Mg(2+) as cofactor.

It localises to the cytoplasm. It carries out the reaction Mo-molybdopterin + GTP + H(+) = Mo-molybdopterin guanine dinucleotide + diphosphate. In terms of biological role, transfers a GMP moiety from GTP to Mo-molybdopterin (Mo-MPT) cofactor (Moco or molybdenum cofactor) to form Mo-molybdopterin guanine dinucleotide (Mo-MGD) cofactor. The polypeptide is Molybdenum cofactor guanylyltransferase (Serratia proteamaculans (strain 568)).